The following is a 1530-amino-acid chain: MSSQGSPSVALSTTTVSSVAVQAGDSKIVIAVIKCGKWVQLQLAESQPNLLEIGSSQDETKKLLHDHELLLAKLKALEDRVWELLQEADKTAEENKDQSQVYDAMAETLGEAWAALVSMLERRTELLRLTSEFFENALEFAIKIDQAEDFLQNTHEFESAESLKSLLQLHEHHTKELLERSLALLNKSQQLTDFIEKFKCEGPNVNPELTQGAHSSCLKVDRLLELLQDRRRQLDKYLKQQWQELSQVLQICQWDQQENQVTCWFQKTIRNLQEQSLGSSLSDNEDRIHKQEELIIKAKEWNSAVEKLKSEALRILLSKDYVEKEHLQLSHQKLSQLQEEFGQLMVERNTWLKKANEFFNSANKAFDVLGRVEAYLKLLKSEGLSLAVLAVRHEELHRKIKDCTTDALQKGQTLISQVDSCSSQVSGIHEMMGCIKRRVDHLTEQCSAHKEYALKKQQLTASVEGYLRKVEMSIQKISPVLSNAMDVGSTRSESEKILNKYLELDIQAKETSHELEAAAKTMMEKNEFVSDEMVSLSSKARWLAEELNLFGQSIDYRSQVLQTYVAFLKSSEEVEMQFQSLKEFYETEIPQKEQDDAKAKHCSDSAEKQWQLFLKKSFITQDLGLEFLNLINMAKENEILDVKNEVYLMKNTMENQKAEREELSLLRLAWQLKATESKPGKQQWAAFKEQLKKTSHNLKLLQEALMPVSALDLGGSLQFILDLRQKWNDMKPQFQQLNDEVQYIMKESEELTGRGAPVKEKSQQLKDLIHFHQKQKERIQDYEDILYKVVQFHQVKEELGRLIKSRELEFVEQPKELGDAHDVQIHLRCSQEKQARVDHLHRLALSLGVDIISSVQRPHCSNVSAKNLQQQLELLEEDSMKWRAKAEEYGRTLSRSVEYCAMRDEINELKDSFKDIKKKFNNLKFNYTKKNEKSRNLKALKYQIQQVDMYAEKMQALKRKMEKVSNKTSDSFLNYPSDKVNVLLEVMKDLQKHVDDFDKVVTDYKKNLDLTEHFQEVIEECHFWYEDASATVVRVGKYSTECKTKEAVKILHQQFNKFIAPSVPQQEERIQEATDLAQHLYGLEEGQKYIEKIVTKHKEVLESVTELCESLTELEEKLKQGDVLKMNPNLEDFHYDYIDLLKEPAKNKQTIFNEERNKGQVQVADLLGINGTGEERLPQDLKVSTDKEGGVQDLLLPEDMLSGEEYECVSPDDISLPPLPGSPESPLAPSDMEVEEPVSSSLSLHISSYGVQAGTSSPGDAQESVLPPPVAFADACNDKRETFSSHFERPYLQFKAEPPLTSRGFVEKSTALHRISAEHPESMMSEVHERALQQHPQAQGGLLETREKMHADNNFTKTQDRLHASSDAFSGLRFQSGTSRGYQRQMVPREEIKSTSAKSSVVSLADQAPNFSRLLSNVTVMEGSPVTLEVEVTGFPEPTLTWYKKGQKLSADGHLQVLHKETRHSVFIPKVCKADAGLYVARAQNSSGALSSNVILHVTGNCRLPITRVNWITLCVVYVSVSLMYWLLTQ.

Residue threonine 91 is modified to Phosphothreonine. 3 coiled-coil regions span residues valine 642–methionine 706, valine 758–glutamate 783, and serine 861–aspartate 970. The tract at residues serine 1210–serine 1241 is disordered. Residues proline 1409 to glutamine 1530 form the Ig-like domain.

Interacts with DISC1. Interacts preferentially with phosphorylated forms of myosin regulatory light chain (MRLC). Interacts (via the N-terminal region) with HDAC6; inhibits the deacetylase activity of HDAC6. Interacts with KIBRA (via the C-terminal region); retains AMPAR in the cytosol after internalization. In terms of processing, ubiquitinated and degradated by the CDC20-APC/C pathway. During brain development, CDC20-APC/C complex degrades CCDC141 after centrosome translocation into the dilated area. CCDC141 is restabilized in the dilation until the centrosome enters the dilation, at which point it is once again immediately destabilized by CDC20-APC/C complex. The oscillatory regulation of CCDC141 protein is needed for proper cortical migration. Post-translationally, phosphorylation at Thr-91 by PLK1 affects CCDC141 degradation.

The protein localises to the cytoplasm. The protein resides in the cytoskeleton. It is found in the microtubule organizing center. It localises to the centrosome. Its function is as follows. Plays a critical role in cortical radial and GnRH neurons migration during brain development. Regulates cortical radial migration by negatively controlling the activity of histone deacetylase 6 (HDAC6) and promotes centrosome maturation. CAMDI is required for dilation formation of cortical neurons during radial migration. Plays a critical role in learning and memory performance through regulation of AMPA-selective glutamate receptors (AMPARs) cell surface expression in competition with KIBRA. This is Coiled-coil domain-containing protein 141 (CCDC141) from Homo sapiens (Human).